Reading from the N-terminus, the 762-residue chain is N,N-dimethylformamidase beta subunit (762 aa).

As to quaternary structure, heterotetramer of two DmfA1 (alpha) and two DmfA2 (beta) subunits.

The catalysed reaction is N,N-dimethylformamide + H2O = dimethylamine + formate. In terms of biological role, hydrolyzes N,N-dimethylformamide, and to a lesser extent N,N-dimethylacetamide and N,N-diethylacetamide. Has no activity against the substituted amides N-methylformamide, N-ethylformamide, N-ethylformamide and N-methylacetamide or the unsubstituted amides formamide, nicotinamide, acetoamide, benzamide, acetamide and acrylamide. The polypeptide is N,N-dimethylformamidase beta subunit (Paracoccus aminophilus).